Reading from the N-terminus, the 106-residue chain is UPF0213 protein VPA1222 (106 aa).

One can recognise a GIY-YIG domain in the interval Gln-7–Gln-82.

It belongs to the UPF0213 family.

The protein is UPF0213 protein VPA1222 of Vibrio parahaemolyticus serotype O3:K6 (strain RIMD 2210633).